Consider the following 480-residue polypeptide: Sialyltransferase-like protein 5 (480 aa).

Topologically, residues 1–17 are cytoplasmic; it reads MARAPPPLSSLPPPPRR. Residues 18–38 traverse the membrane as a signal-anchor for type II membrane protein segment; sequence PTVVLLLGLALAFCLAVLSIQ. Topologically, residues 39 to 480 are lumenal; sequence SSFFTAPRLA…VCVRHERSSS (442 aa). 4 N-linked (GlcNAc...) asparagine glycosylation sites follow: N98, N130, N165, and N321.

The protein belongs to the glycosyltransferase 29 family.

Its subcellular location is the golgi apparatus membrane. Its function is as follows. May possess sialyltransferase-like activity in vitro. In Oryza sativa subsp. japonica (Rice), this protein is Sialyltransferase-like protein 5.